The following is a 352-amino-acid chain: uncharacterized protein (352 aa).

The signal sequence occupies residues 1 to 22 (MAIYLDKLKMPIIIGLIVLIIA).

Belongs to the bacterial solute-binding protein 1 family. WtpA subfamily.

This is an uncharacterized protein from Staphylothermus marinus (strain ATCC 43588 / DSM 3639 / JCM 9404 / F1).